The chain runs to 294 residues: N-acetylmuramic acid 6-phosphate etherase (294 aa).

One can recognise an SIS domain in the interval 54–217; sequence VISSFQNGGR…STASMIGIGK (164 aa). Glutamate 82 (proton donor) is an active-site residue. Residue glutamate 113 is part of the active site.

The protein belongs to the GCKR-like family. MurNAc-6-P etherase subfamily. As to quaternary structure, homodimer.

It catalyses the reaction N-acetyl-D-muramate 6-phosphate + H2O = N-acetyl-D-glucosamine 6-phosphate + (R)-lactate. The protein operates within amino-sugar metabolism; N-acetylmuramate degradation. Specifically catalyzes the cleavage of the D-lactyl ether substituent of MurNAc 6-phosphate, producing GlcNAc 6-phosphate and D-lactate. This chain is N-acetylmuramic acid 6-phosphate etherase, found in Bacillus cytotoxicus (strain DSM 22905 / CIP 110041 / 391-98 / NVH 391-98).